The chain runs to 619 residues: ATP-dependent zinc metalloprotease FtsH (619 aa).

Over 1 to 11 (MSNTDPQPPQK) the chain is Cytoplasmic. The helical transmembrane segment at 12-32 (LPLNWVVWTLAVALMLYYLPA) threads the bilayer. Over 33-120 (MRDRPEPAIK…EVKEGHDASS (88 aa)) the chain is Periplasmic. Residues 121 to 141 (SKVILLSYLPWIMFMIILFWL) traverse the membrane as a helical segment. The Cytoplasmic portion of the chain corresponds to 142–619 (SRRTFRNFSG…IDECLQTGAS (478 aa)). 216–223 (GPPGTGKT) is an ATP binding site. H437 lines the Zn(2+) pocket. Residue E438 is part of the active site. Residues H441 and D513 each coordinate Zn(2+).

This sequence in the central section; belongs to the AAA ATPase family. The protein in the C-terminal section; belongs to the peptidase M41 family. In terms of assembly, homohexamer. Requires Zn(2+) as cofactor.

The protein resides in the cell inner membrane. In terms of biological role, acts as a processive, ATP-dependent zinc metallopeptidase for both cytoplasmic and membrane proteins. Plays a role in the quality control of integral membrane proteins. The chain is ATP-dependent zinc metalloprotease FtsH from Hahella chejuensis (strain KCTC 2396).